Here is a 396-residue protein sequence, read N- to C-terminus: Acetate kinase (396 aa).

Asparagine 8 contacts Mg(2+). Lysine 15 contacts ATP. Arginine 89 provides a ligand contact to substrate. The Proton donor/acceptor role is filled by aspartate 146. ATP is bound by residues histidine 206–glycine 210, aspartate 283–arginine 285, and glycine 331–asparagine 335. Glutamate 383 provides a ligand contact to Mg(2+).

The protein belongs to the acetokinase family. Homodimer. Mg(2+) serves as cofactor. Mn(2+) is required as a cofactor.

It localises to the cytoplasm. It catalyses the reaction acetate + ATP = acetyl phosphate + ADP. It participates in metabolic intermediate biosynthesis; acetyl-CoA biosynthesis; acetyl-CoA from acetate: step 1/2. Its function is as follows. Catalyzes the formation of acetyl phosphate from acetate and ATP. Can also catalyze the reverse reaction. This Streptococcus pneumoniae serotype 2 (strain D39 / NCTC 7466) protein is Acetate kinase.